Consider the following 243-residue polypeptide: Zinc import ATP-binding protein ZnuC (243 aa).

Residues 8-225 (LNLSNVSYYI…SEFQKLFGHH (218 aa)) form the ABC transporter domain. 40 to 47 (GPNGAGKS) contacts ATP.

Belongs to the ABC transporter superfamily. Zinc importer (TC 3.A.1.15.5) family. The complex is composed of two ATP-binding proteins (ZnuC), two transmembrane proteins (ZnuB) and a solute-binding protein (ZnuA).

The protein localises to the cell inner membrane. It carries out the reaction Zn(2+)(out) + ATP(in) + H2O(in) = Zn(2+)(in) + ADP(in) + phosphate(in) + H(+)(in). Its function is as follows. Part of the ABC transporter complex ZnuABC involved in zinc import. Responsible for energy coupling to the transport system. This is Zinc import ATP-binding protein ZnuC from Psychrobacter arcticus (strain DSM 17307 / VKM B-2377 / 273-4).